Reading from the N-terminus, the 771-residue chain is Ribonucleoside-diphosphate reductase large subunit (771 aa).

One can recognise an ATP-cone domain in the interval 1–92 (MFVIKRNGYK…VSNLHKETKK (92 aa)). ATP-binding positions include 5–6 (KR), 11–17 (ENVMFDK), Thr53, Asp57, and Lys88. Ser202 and Ser217 together coordinate GDP. DTTP is bound by residues 226-228 (DSI), Lys243, and Arg256. Residue Asn427 coordinates GDP. The active-site Proton acceptor is the Asn427. The active-site Cysteine radical intermediate is the Cys429. Residues Glu431 and 603–606 (TAST) contribute to the GDP site. Residue Glu431 is the Proton acceptor of the active site.

This sequence belongs to the ribonucleoside diphosphate reductase large chain family. As to quaternary structure, interacts with RNR2/OPG047 subunit. Mg(2+) serves as cofactor.

It catalyses the reaction a 2'-deoxyribonucleoside 5'-diphosphate + [thioredoxin]-disulfide + H2O = a ribonucleoside 5'-diphosphate + [thioredoxin]-dithiol. Ribonucleoside-diphosphate reductase holoenzyme provides the precursors necessary for viral DNA synthesis. Allows virus growth in non-dividing cells. Catalyzes the biosynthesis of deoxyribonucleotides from the corresponding ribonucleotides. The sequence is that of Ribonucleoside-diphosphate reductase large subunit (OPG080) from Homo sapiens (Human).